The chain runs to 498 residues: Guanosine-5'-triphosphate,3'-diphosphate pyrophosphatase (498 aa).

Belongs to the GppA/Ppx family. GppA subfamily.

The catalysed reaction is guanosine 3'-diphosphate 5'-triphosphate + H2O = guanosine 3',5'-bis(diphosphate) + phosphate + H(+). The protein operates within purine metabolism; ppGpp biosynthesis; ppGpp from GTP: step 2/2. Functionally, catalyzes the conversion of pppGpp to ppGpp. Guanosine pentaphosphate (pppGpp) is a cytoplasmic signaling molecule which together with ppGpp controls the 'stringent response', an adaptive process that allows bacteria to respond to amino acid starvation, resulting in the coordinated regulation of numerous cellular activities. The protein is Guanosine-5'-triphosphate,3'-diphosphate pyrophosphatase of Serratia proteamaculans (strain 568).